The chain runs to 278 residues: Undecaprenyl-diphosphatase 1 (278 aa).

5 helical membrane-spanning segments follow: residues 85–105, 108–128, 188–208, 218–238, and 254–274; these read LNVI…EKTI, ALFS…VILW, VATE…TAYE, VDAL…AFAC, and FAWY…SGAL.

The protein belongs to the UppP family.

It is found in the cell inner membrane. The catalysed reaction is di-trans,octa-cis-undecaprenyl diphosphate + H2O = di-trans,octa-cis-undecaprenyl phosphate + phosphate + H(+). In terms of biological role, catalyzes the dephosphorylation of undecaprenyl diphosphate (UPP). Confers resistance to bacitracin. The chain is Undecaprenyl-diphosphatase 1 from Paraburkholderia xenovorans (strain LB400).